Consider the following 485-residue polypeptide: Catalase isozyme 1 (485 aa).

Catalysis depends on residues H58 and N131. Y341 contributes to the heme binding site.

Belongs to the catalase family. As to quaternary structure, homotetramer. Heme serves as cofactor.

The protein localises to the peroxisome. The catalysed reaction is 2 H2O2 = O2 + 2 H2O. Functionally, occurs in almost all aerobically respiring organisms and serves to protect cells from the toxic effects of hydrogen peroxide. The polypeptide is Catalase isozyme 1 (CAT1) (Nicotiana plumbaginifolia (Leadwort-leaved tobacco)).